The sequence spans 288 residues: Bifunctional protein FolD (288 aa).

NADP(+) contacts are provided by residues 166–168 (GRS), Ser-191, and Ile-232.

It belongs to the tetrahydrofolate dehydrogenase/cyclohydrolase family. As to quaternary structure, homodimer.

The catalysed reaction is (6R)-5,10-methylene-5,6,7,8-tetrahydrofolate + NADP(+) = (6R)-5,10-methenyltetrahydrofolate + NADPH. It carries out the reaction (6R)-5,10-methenyltetrahydrofolate + H2O = (6R)-10-formyltetrahydrofolate + H(+). Its pathway is one-carbon metabolism; tetrahydrofolate interconversion. Functionally, catalyzes the oxidation of 5,10-methylenetetrahydrofolate to 5,10-methenyltetrahydrofolate and then the hydrolysis of 5,10-methenyltetrahydrofolate to 10-formyltetrahydrofolate. The polypeptide is Bifunctional protein FolD (Rickettsia canadensis (strain McKiel)).